We begin with the raw amino-acid sequence, 871 residues long: MKSSEIRQQFLDFFASKGHQIVSSSSLVPHEDPTLLFTNAGMNQFKDVFLGFDKRPYSRATTSQKCVRAGGKHNDLENVGYTARHHTFFEMLGNFSFGDYFKRDAIKYAWELLTEVYKLPKDKLTVTVYAEDDEAYDIWTKEIGVPVERVIRIGDNKGARYASDNFWMMGDTGPCGPCTEIFYDHGEKYWGGPPGSPEEDGDRFIEIWNNVFMQFNRDEAGVMHPLPKPSVDTGMGLERVSAVLQGVHANYEIDLFQALLKAAARETSDADLDSPSLKVLADHIRACSFLLADGVIPGNEGRGYVLRRIIRRAIRHGYKLGARAAFFHKMVPDLVAEMGMAYPELGQNQAKIVATLKQEEDRFFETIEHGMAILEGELKSLGEGGVFNGDTAFKLHDTYGFPLDLTQDICREHKITVDAAAFDAAMARQKEQARAAGKFKMATNLEYDGPATTFHGYAALEYKANVLALYKDGIAVNQLNEGEMGVVVLDDTPFYAESGGQVGDCGALQSVHGIFAVEDTQKIQATVFGHHGVVKTGTITVGNGVAAKVDVQARQRIMRNHSATHLLHKALREVLGDHVQQKGSQVDPDKTRFDFVHNQPMTDEEIRRVENIVNAEILANVATETRVLPIAEAQKLGAMMLFGEKYGDDVRVLDIGSSRELCGGTHVSRTGDIGLFSITAEGGVAAGVRRVEAVTGDNALAYMQDMESALGGVAGTLKVLPKDVHGRVLAVLDQVKKLERELAALKGKLASAQGDDMLSNAVDIKGAKVLAATLEGADVNALRETMDKLKDKLKSAAIVLASVADGKVTLIAGVTADLTGKVKAGELVNLVAQQIGGKGGGRPDMAQAGGTQPENLPAALASVAGWVEGKL.

4 residues coordinate Zn(2+): histidine 561, histidine 565, cysteine 662, and histidine 666.

This sequence belongs to the class-II aminoacyl-tRNA synthetase family. Zn(2+) serves as cofactor.

The protein localises to the cytoplasm. The enzyme catalyses tRNA(Ala) + L-alanine + ATP = L-alanyl-tRNA(Ala) + AMP + diphosphate. In terms of biological role, catalyzes the attachment of alanine to tRNA(Ala) in a two-step reaction: alanine is first activated by ATP to form Ala-AMP and then transferred to the acceptor end of tRNA(Ala). Also edits incorrectly charged Ser-tRNA(Ala) and Gly-tRNA(Ala) via its editing domain. In Dechloromonas aromatica (strain RCB), this protein is Alanine--tRNA ligase.